The chain runs to 854 residues: Translation initiation factor IF-2 (854 aa).

Over residues 61–72 the composition is skewed to basic residues; that stretch reads KNIKTPTAKKPK. Disordered regions lie at residues 61–115 and 167–186; these read KNIK…LASA and ESLKKKKKEKKSFVASKKES. Residues 73-108 show a composition bias toward basic and acidic residues; it reads KENAKDQEKLNESEKKEPKKEESKEQEKQEIIDTHK. Positions 353 to 520 constitute a tr-type G domain; the sequence is TRAPVITIMG…IVLLQADILE (168 aa). Positions 362–369 are G1; the sequence is GHVDHGKT. 362 to 369 contributes to the GTP binding site; it reads GHVDHGKT. A G2 region spans residues 387 to 391; that stretch reads GITQH. Residues 408–411 form a G3 region; the sequence is DTPG. GTP is bound by residues 408 to 412 and 462 to 465; these read DTPGH and NKMD. Residues 462 to 465 are G4; it reads NKMD. The G5 stretch occupies residues 498–500; sequence SAK.

Belongs to the TRAFAC class translation factor GTPase superfamily. Classic translation factor GTPase family. IF-2 subfamily.

The protein resides in the cytoplasm. In terms of biological role, one of the essential components for the initiation of protein synthesis. Protects formylmethionyl-tRNA from spontaneous hydrolysis and promotes its binding to the 30S ribosomal subunits. Also involved in the hydrolysis of GTP during the formation of the 70S ribosomal complex. The protein is Translation initiation factor IF-2 of Campylobacter jejuni subsp. doylei (strain ATCC BAA-1458 / RM4099 / 269.97).